The following is a 114-amino-acid chain: uncharacterized protein (114 aa).

Residue glycine 2 is the site of N-myristoyl glycine; by host attachment. 2 helical membrane passes run 11–31 (FGLI…KDLL) and 44–64 (GLMW…LVAI). The tract at residues 73-114 (VNKDSKDPKDKSIEFDDSPIRDGSSGTPDNSNEPTDLSVETS) is disordered. Residues 75-92 (KDSKDPKDKSIEFDDSPI) are compositionally biased toward basic and acidic residues. Residues 96-114 (SSGTPDNSNEPTDLSVETS) are compositionally biased toward polar residues.

It is found in the membrane. This is an uncharacterized protein from Acanthamoeba polyphaga (Amoeba).